The sequence spans 509 residues: Anaerobic nitric oxide reductase flavorubredoxin (509 aa).

Positions 30–210 (LQGSSYNSYL…PFSRLVTAKI (181 aa)) are zinc metallo-hydrolase. H79, E81, D83, H147, D166, and H227 together coordinate Fe cation. The 140-residue stretch at 254 to 393 (ITLFYDTMSN…VCREHGREIA (140 aa)) folds into the Flavodoxin-like domain. Residues 260-264 (TMSNN) and 342-369 (AFGS…ETTL) contribute to the FMN site. One can recognise a Rubredoxin-like domain in the interval 457 to 508 (SGCMQCSVCQWIYDPALGEPMQDVTPGTMWSDVPDSFLCPECGLGKDVFNPI). Fe cation is bound by residues C462, C465, C495, and C498.

In the N-terminal section; belongs to the zinc metallo-hydrolase group 3 family. Homotetramer. Fe cation is required as a cofactor. It depends on FMN as a cofactor.

The protein localises to the cytoplasm. Its pathway is nitrogen metabolism; nitric oxide reduction. In terms of biological role, anaerobic nitric oxide reductase; uses NADH to detoxify nitric oxide (NO), protecting several 4Fe-4S NO-sensitive enzymes. Has at least 2 reductase partners, only one of which (NorW, flavorubredoxin reductase) has been identified. NO probably binds to the di-iron center; electrons enter from the NorW at rubredoxin and are transferred sequentially to the FMN center and the di-iron center. Also able to function as an aerobic oxygen reductase. The polypeptide is Anaerobic nitric oxide reductase flavorubredoxin (Pectobacterium atrosepticum (strain SCRI 1043 / ATCC BAA-672) (Erwinia carotovora subsp. atroseptica)).